The chain runs to 666 residues: UvrABC system protein B (666 aa).

One can recognise a Helicase ATP-binding domain in the interval 26–183; the sequence is DSFQKGAEKV…RKLLHIQYNR (158 aa). 39–46 is a binding site for ATP; the sequence is GVTGSGKT. The Beta-hairpin motif lies at 92–115; sequence YYDYYQPEAYVPSSDTFIEKDSSI. The 163-residue stretch at 429-591 folds into the Helicase C-terminal domain; that stretch reads QIEDLLVEIR…ITPLTIRKEV (163 aa). The UVR domain maps to 625–660; that stretch reads EVLKDKLREEMMKAAKELDFERAAILRDKMLSIQIN.

The protein belongs to the UvrB family. As to quaternary structure, forms a heterotetramer with UvrA during the search for lesions. Interacts with UvrC in an incision complex.

It localises to the cytoplasm. In terms of biological role, the UvrABC repair system catalyzes the recognition and processing of DNA lesions. A damage recognition complex composed of 2 UvrA and 2 UvrB subunits scans DNA for abnormalities. Upon binding of the UvrA(2)B(2) complex to a putative damaged site, the DNA wraps around one UvrB monomer. DNA wrap is dependent on ATP binding by UvrB and probably causes local melting of the DNA helix, facilitating insertion of UvrB beta-hairpin between the DNA strands. Then UvrB probes one DNA strand for the presence of a lesion. If a lesion is found the UvrA subunits dissociate and the UvrB-DNA preincision complex is formed. This complex is subsequently bound by UvrC and the second UvrB is released. If no lesion is found, the DNA wraps around the other UvrB subunit that will check the other stand for damage. The chain is UvrABC system protein B from Leptospira borgpetersenii serovar Hardjo-bovis (strain JB197).